A 993-amino-acid polypeptide reads, in one-letter code: Mediator of RNA polymerase II transcription subunit 24 (993 aa).

Phosphoserine occurs at positions 827 and 829.

The protein belongs to the Mediator complex subunit 24 family. As to quaternary structure, component of the Mediator complex, which includes at least CDK8, MED4, MED6, MED11, MED14, MED17, MED18, MED20, MED21, MED22, MED27, MED28, MED30 and MED31.

The protein resides in the nucleus. In terms of biological role, component of the Mediator complex, a coactivator involved in the regulated transcription of nearly all RNA polymerase II-dependent genes. Mediator functions as a bridge to convey information from gene-specific regulatory proteins to the basal RNA polymerase II transcription machinery. Mediator is recruited to promoters by direct interactions with regulatory proteins and serves as a scaffold for the assembly of a functional preinitiation complex with RNA polymerase II and the general transcription factors. Required for activated transcription of the MtnA, MtnB and MtnD genes. The chain is Mediator of RNA polymerase II transcription subunit 24 (MED24) from Drosophila melanogaster (Fruit fly).